Here is a 257-residue protein sequence, read N- to C-terminus: UPF0246 protein YaaA (257 aa).

This sequence belongs to the UPF0246 family.

In Salmonella schwarzengrund (strain CVM19633), this protein is UPF0246 protein YaaA.